A 146-amino-acid polypeptide reads, in one-letter code: Ubiquitin-conjugating enzyme E2 variant 1D (146 aa).

One can recognise a UBC core domain in the interval 13-146 (PRNFRLLEEL…LVQPPEGTCF (134 aa)).

This sequence belongs to the ubiquitin-conjugating enzyme family. In terms of assembly, heterodimer with UBC35 or UBC36. In terms of tissue distribution, expressed in roots, shoots, leaves, stems, flowers and pollen.

In terms of biological role, has no ubiquitin ligase activity on its own. The heterodimer with UBC catalyzes the synthesis of non-canonical poly-ubiquitin chains that are linked through 'Lys-63'. This type of poly-ubiquitination does not lead to protein degradation by the proteasome. Mediates transcriptional activation of target genes. May play a role in the control of progress through the cell cycle and differentiation. Involved in the error-free DNA repair pathway and contributes to the survival of cells after DNA damage. This Arabidopsis thaliana (Mouse-ear cress) protein is Ubiquitin-conjugating enzyme E2 variant 1D (UEV1D).